The following is a 352-amino-acid chain: Dysbindin (352 aa).

Ser-11 is subject to Phosphoserine. A coiled-coil region spans residues 88–176; that stretch reads EKKRTSLNEL…EAFKAELDTE (89 aa). The interval 173–325 is dysbindin; the sequence is LDTEHTQKAL…DEEEVQVDTA (153 aa). A Nuclear export signal motif is present at residues 243 to 256; that stretch reads LMDISDQEALDVFL. The tract at residues 267-352 is disordered; sequence SPGVEMESNP…SDQCDSTQDI (86 aa). Polar residues predominate over residues 274 to 285; that stretch reads SNPNQNEMSLQI. Residues 286 to 301 are compositionally biased toward low complexity; sequence PSPSESASQPPASPSA. Residues Ser-315, Ser-340, and Ser-343 each carry the phosphoserine modification.

This sequence belongs to the dysbindin family. Interacts with AP3M1 and TRIM32. Interacts (isoform 1 and isoform 2 only) with the DNA-dependent protein kinase complex DNA-PK; the interaction phosphorylates DTNBP1 in vitro. Interacts directly in this complex with XRCC5 and XRCC6. Interacts with XPO1; the interaction exports DTNBP1 out of the nucleus. Component of the biogenesis of lysosome-related organelles complex 1 (BLOC-1) composed of BLOC1S1, BLOC1S2, BLOC1S3, BLOC1S4, BLOC1S5, BLOC1S6, DTNBP1/BLOC1S7 and SNAPIN/BLOC1S8. The BLOC-1 complex associates with the AP-3 protein complex and membrane protein cargos. This BLOC-1 complex also associates with the BLOC-2 complex in endosomes. Binds to DTNA and DTNB but may not be a physiological binding partner. Interacts (via its coiled coil domain) with KXD1. Interacts with AP3B2, BLOC1S5, BLOC1S6, CMYA5, PI4K2, RNF151 and SNAPIN/BLOC1S8. Interacts with XPO1; the interaction exports DTNBP1 out of the nucleus. In terms of processing, ubiquitinated by TRIM32. Ubiquitination leads to DTNBP1 degradation. In terms of tissue distribution, detected in brain, in hippocampus and dentate gyrus neurons. Detected at axon bundles and axon terminals, notably in the cerebellum and hippocampus. Detected in neuropil in hippocampus, lateral septum, basal ganglia and substantia nigra. Highly expressed in pyramidal cells of hippocampus CA2 and CA3. Detected at the heart and skeletal muscle sarcolemma (at protein level). Ubiquitously expressed. The highest expression is observed in testis, liver, kidney, brain, heart and lung. Expressed at lower levels in stomach and small intestine.

It is found in the cytoplasm. Its subcellular location is the cytoplasmic vesicle membrane. It localises to the endosome membrane. The protein resides in the melanosome membrane. The protein localises to the postsynaptic density. It is found in the endoplasmic reticulum. Its subcellular location is the nucleus. It localises to the cytoplasmic vesicle. The protein resides in the secretory vesicle. The protein localises to the synaptic vesicle membrane. It is found in the postsynaptic cell membrane. Component of the BLOC-1 complex, a complex that is required for normal biogenesis of lysosome-related organelles (LRO), such as platelet dense granules and melanosomes. In concert with the AP-3 complex, the BLOC-1 complex is required to target membrane protein cargos into vesicles assembled at cell bodies for delivery into neurites and nerve terminals. The BLOC-1 complex, in association with SNARE proteins, is also proposed to be involved in neurite extension. Associates with the BLOC-2 complex to facilitate the transport of TYRP1 independent of AP-3 function. Plays a role in synaptic vesicle trafficking and in neurotransmitter release. Plays a role in the regulation of cell surface exposure of DRD2. May play a role in actin cytoskeleton reorganization and neurite outgrowth. May modulate MAPK8 phosphorylation. Appears to promote neuronal transmission and viability through regulating the expression of SNAP25 and SYN1, modulating PI3-kinase-Akt signaling and influencing glutamatergic release. Regulates the expression of SYN1 through binding to its promoter. Modulates prefrontal cortical activity via the dopamine/D2 pathway. In Mus musculus (Mouse), this protein is Dysbindin (Dtnbp1).